A 376-amino-acid chain; its full sequence is UPF0754 membrane protein BH1148 (376 aa).

Transmembrane regions (helical) follow at residues 3–23 (LILF…SLAI) and 355–375 (YLGA…ILLI).

Belongs to the UPF0754 family.

It localises to the cell membrane. This is UPF0754 membrane protein BH1148 from Halalkalibacterium halodurans (strain ATCC BAA-125 / DSM 18197 / FERM 7344 / JCM 9153 / C-125) (Bacillus halodurans).